We begin with the raw amino-acid sequence, 733 residues long: MNNESKCPFAAAHGVRSPATARANRDWWPNQLNLNILHQHAPASNPLGEDFDYAAEFNTLDLAALKQDLYALMTMSQDWWPADWGHYGGLFIRMAWHSAGTYRTADGRGGGGTGNQRFAPLNSWPDNGNLDKARRLLWPIKQKYGNKISWADLMILAGNCALESMGFKTFGFGGGRADIWQPEEDIYWGAEKEWLATSDKPDSRYSGERQLENPLAAVQMGLIYVNPEGPDGNPDPVASGRDVRETFARMAMNDEETVALVAGGHTFGKAHGAGDPKLVGPEPEGAPIEAQGLGWINSFGTGHGVHTTTSGIEGAWKPNPTKWDNGYFDMLFGYEWALTRSPAGAHQWVAQNVKPEDMIPDAHDPSKKHPPMMTTADLSLRFDPIYEPIARRFHKNPADFADAFARAWFKLTHRDMGPKSRYLGPEVPAEDLIWQDPIPRLDHPLIDAADIATLKAMVLASGVSIAELVSTAWASASTFRGSDMRGGANGARIRLAPQKDWDVNQPAQLAKVLSVLGDIQAGFNAAAPGGKKVSLADLIVLGGCAAVEAAARAAGHVVEVPFTPGRMDASQEQTDVESFAVLEPIADGFRNYQKQVYAVSAEELLVDKAQLLTLSAPEMTVLVGGLRVLGANAGGSPHGVFTRRPQTLSNDFFVNLLDMSTAWKPAGDSFEGRDRKSGELKWTATRVDLVFGSNSQLRALAEVYAQDDAKEKFVRDFVAAWNKVMNLDRFDVK.

The first 23 residues, 1–23 (MNNESKCPFAAAHGVRSPATARA), serve as a signal peptide directing secretion. The tryptophyl-tyrosyl-methioninium (Trp-Tyr) (with M-250) cross-link spans 96–224 (WHSAGTYRTA…LAAVQMGLIY (129 aa)). Residue His-97 is the Proton acceptor of the active site. The tryptophyl-tyrosyl-methioninium (Tyr-Met) (with W-96) cross-link spans 224-250 (YVNPEGPDGNPDPVASGRDVRETFARM). Position 265 (His-265) interacts with heme b.

Belongs to the peroxidase family. Peroxidase/catalase subfamily. Homodimer or homotetramer. It depends on heme b as a cofactor. Post-translationally, formation of the three residue Trp-Tyr-Met cross-link is important for the catalase, but not the peroxidase activity of the enzyme.

It carries out the reaction H2O2 + AH2 = A + 2 H2O. It catalyses the reaction 2 H2O2 = O2 + 2 H2O. In terms of biological role, bifunctional enzyme with both catalase and broad-spectrum peroxidase activity. This Azoarcus sp. (strain BH72) protein is Catalase-peroxidase.